We begin with the raw amino-acid sequence, 177 residues long: Nucleoside triphosphate/diphosphate phosphatase (177 aa).

Arginine 23 serves as the catalytic Proton donor. 6 residues coordinate Mg(2+): asparagine 87, aspartate 103, aspartate 105, aspartate 107, aspartate 120, and glutamate 123.

The protein belongs to the Ntdp family. Requires Mg(2+) as cofactor.

The catalysed reaction is a ribonucleoside 5'-triphosphate + H2O = a ribonucleoside 5'-diphosphate + phosphate + H(+). The enzyme catalyses a ribonucleoside 5'-diphosphate + H2O = a ribonucleoside 5'-phosphate + phosphate + H(+). Its function is as follows. Has nucleoside phosphatase activity towards nucleoside triphosphates and nucleoside diphosphates. This Streptococcus pyogenes serotype M3 (strain ATCC BAA-595 / MGAS315) protein is Nucleoside triphosphate/diphosphate phosphatase.